The chain runs to 288 residues: 4-diphosphocytidyl-2-C-methyl-D-erythritol kinase (288 aa).

The active site involves Lys-11. 100–110 (PIAAGLGSGSS) contacts ATP. Asp-140 is an active-site residue.

The protein belongs to the GHMP kinase family. IspE subfamily.

It carries out the reaction 4-CDP-2-C-methyl-D-erythritol + ATP = 4-CDP-2-C-methyl-D-erythritol 2-phosphate + ADP + H(+). It participates in isoprenoid biosynthesis; isopentenyl diphosphate biosynthesis via DXP pathway; isopentenyl diphosphate from 1-deoxy-D-xylulose 5-phosphate: step 3/6. Catalyzes the phosphorylation of the position 2 hydroxy group of 4-diphosphocytidyl-2C-methyl-D-erythritol. This chain is 4-diphosphocytidyl-2-C-methyl-D-erythritol kinase, found in Wolbachia pipientis wMel.